The following is a 75-amino-acid chain: Parvalbumin beta 3 (75 aa).

Position 1 is an N-acetylalanine (Ala1). Residues 26–61 form the EF-hand domain; the sequence is YKAFFAKKAFFVIDQDKSGFIEEDELKLFLQVFSAG. Asp39, Asp41, Ser43, Phe45, Glu47, and Glu50 together coordinate Ca(2+).

Belongs to the parvalbumin family.

In muscle, parvalbumin is thought to be involved in relaxation after contraction. It binds two calcium ions. The protein is Parvalbumin beta 3 of Merluccius gayi (South Pacific hake).